A 511-amino-acid polypeptide reads, in one-letter code: MKDNKIIIFDTTLRDGEQALGSSLGINQKLQIALALENLGVDVIEAGFPVSSQGDFKAVQKIASKVKNSTICALSRALDKDIDMAYEALKVAKHFRIHTFIATSTLHMQDKLKKDFDEILSMAKRAIIRARSYTDDVEFSCEDAGRTPIDNLCFMVENAIKAGAKTINIPDTVGYTLPSEFANIIKILFNKVPNIDKAIISVHCHNDLGVATGNSLSAILQGARQIECTINGLGERAGNCALEEVVMAIKTRKDYLKGFYTDIKCENIFKTSKLVSAITNESIPSHKAIVGSNAFSHSSGIHQDGVLKNRQTYEIISPSAIGIHENRMLMTARSGRAMIKTCLENLGYDENTYNLDDVYERFLRLADKKGQVYDYDLEALMFLSYENEEENEFVIEKLSVISGNIPTACVCMRIKEELKTEACTGNGPVEAVFNCIARITNLKPALKAYSINAKSSGVDAQGQVDVDLEFKGRKFHGKGISTDVIEASAQAFVSAYNAIYRSLKVEERKMA.

The Pyruvate carboxyltransferase domain maps to 6-269 (IIIFDTTLRD…YTDIKCENIF (264 aa)). D15, H203, H205, and N239 together coordinate Mn(2+). The regulatory domain stretch occupies residues 394-511 (VIEKLSVISG…SLKVEERKMA (118 aa)).

It belongs to the alpha-IPM synthase/homocitrate synthase family. LeuA type 1 subfamily. As to quaternary structure, homodimer. Mn(2+) is required as a cofactor.

Its subcellular location is the cytoplasm. The catalysed reaction is 3-methyl-2-oxobutanoate + acetyl-CoA + H2O = (2S)-2-isopropylmalate + CoA + H(+). Its pathway is amino-acid biosynthesis; L-leucine biosynthesis; L-leucine from 3-methyl-2-oxobutanoate: step 1/4. In terms of biological role, catalyzes the condensation of the acetyl group of acetyl-CoA with 3-methyl-2-oxobutanoate (2-ketoisovalerate) to form 3-carboxy-3-hydroxy-4-methylpentanoate (2-isopropylmalate). The protein is 2-isopropylmalate synthase of Campylobacter jejuni subsp. jejuni serotype O:23/36 (strain 81-176).